A 927-amino-acid chain; its full sequence is Disks large homolog 1 (927 aa).

In terms of domain architecture, L27 spans 4 to 64 (RKQDTQRALT…FYEVTLLDNP (61 aa)). PDZ domains follow at residues 223-310 (EITL…RRRK), 318-405 (DIKL…AKPT), and 466-547 (KVVL…QYRP). Positions 581–651 (KRSLYVRALF…PSKRRVEKKE (71 aa)) constitute an SH3 domain. The tract at residues 692-719 (DQSEMETSDVDQHVTSNASDSESSYRGQ) is disordered. A compositionally biased stretch (polar residues) spans 704–717 (HVTSNASDSESSYR). A Guanylate kinase-like domain is found at 737–912 (SRPVIILGPT…IYNQIKQIIE (176 aa)).

The protein belongs to the MAGUK family.

It localises to the cell membrane. The protein localises to the endoplasmic reticulum membrane. The protein resides in the cell junction. It is found in the cytoplasm. Its subcellular location is the apical cell membrane. Its function is as follows. Essential multidomain scaffolding protein required for normal development. Recruits channels, receptors and signaling molecules to discrete plasma membrane domains in polarized cells. Promotes epithelial cell layer barrier function via maintaining cell-cell adhesion. May play a role in adherens junction assembly, signal transduction and cell proliferation. The sequence is that of Disks large homolog 1 (dlg1) from Xenopus tropicalis (Western clawed frog).